Consider the following 367-residue polypeptide: Peptide chain release factor 2 (367 aa).

Position 254 is an N5-methylglutamine (Q254).

Belongs to the prokaryotic/mitochondrial release factor family. In terms of processing, methylated by PrmC. Methylation increases the termination efficiency of RF2.

It is found in the cytoplasm. Its function is as follows. Peptide chain release factor 2 directs the termination of translation in response to the peptide chain termination codons UGA and UAA. The polypeptide is Peptide chain release factor 2 (Leptospira interrogans serogroup Icterohaemorrhagiae serovar copenhageni (strain Fiocruz L1-130)).